Reading from the N-terminus, the 753-residue chain is Metal regulatory transcription factor 1 (753 aa).

Gly2 bears the N-acetylglycine mark. Ser5 carries the post-translational modification Phosphoserine. The short motif at Lys133 to Lys138 is the Nuclear localization signal element. 6 C2H2-type zinc fingers span residues Tyr140–His164, Phe170–His194, Phe200–His224, Phe229–His253, Phe259–His283, and Phe289–His313. At Ser305 the chain carries Phosphoserine. 3 disordered regions span residues Ser308–Gly328, Glu395–Gln466, and Ser648–Met715. The span at Pro408 to Leu417 shows a compositional bias: polar residues. A compositionally biased stretch (pro residues) spans Ser655–Pro666. The segment covering Ser679–Ser698 has biased composition (low complexity). Residues Gln700 to Leu712 are compositionally biased toward polar residues.

It is found in the nucleus. The protein localises to the cytoplasm. Its function is as follows. Zinc-dependent transcriptional regulator of cellular adaption to conditions of exposure to heavy metals. Binds to metal responsive elements (MRE) in promoters and activates the transcription of metallothionein genes like metallothionein-2/MT2A. Also regulates the expression of metalloproteases in response to intracellular zinc and functions as a catabolic regulator of cartilages. The protein is Metal regulatory transcription factor 1 (MTF1) of Homo sapiens (Human).